Here is a 300-residue protein sequence, read N- to C-terminus: Eukaryotic translation initiation factor 3 subunit F (300 aa).

An MPN domain is found at 33 to 169; it reads VKVHPVALFS…VQCYVSALLG (137 aa).

It belongs to the eIF-3 subunit F family. As to quaternary structure, component of the eukaryotic translation initiation factor 3 (eIF-3) complex.

It localises to the cytoplasm. Functionally, component of the eukaryotic translation initiation factor 3 (eIF-3) complex, which is involved in protein synthesis of a specialized repertoire of mRNAs and, together with other initiation factors, stimulates binding of mRNA and methionyl-tRNAi to the 40S ribosome. The eIF-3 complex specifically targets and initiates translation of a subset of mRNAs involved in cell proliferation. This is Eukaryotic translation initiation factor 3 subunit F from Malassezia globosa (strain ATCC MYA-4612 / CBS 7966) (Dandruff-associated fungus).